Consider the following 391-residue polypeptide: Choline/ethanolaminephosphotransferase 1 (391 aa).

Residues 1-49 (MGYFVPDSHIENLKSYKYQSEDRSLVSKYFLKPFWQRFCHIFPTWMAPN) lie on the Lumenal side of the membrane. A helical transmembrane segment spans residues 50–69 (IITLSGFAFIVINVLTVFYY). Topologically, residues 70-172 (DPNLNTDTPR…YHTHTLYLSE (103 aa)) are cytoplasmic. The helical transmembrane segment at 173–193 (FSGPVEGILIVCVSLILTGIY) threads the bilayer. The Lumenal segment spans residues 194–211 (GKQVIWHTYLFTITVGDK). Residues 212–232 (VIDVDTLDIVFSLAVFGLVMN) form a helical membrane-spanning segment. At 233 to 264 (ALSAKRNVDKYYRNSTSSANNITQIEQDSAIK) the chain is on the cytoplasmic side. A helical membrane pass occupies residues 265 to 282 (GLLPFFAYYASIALLVWM). Over 283-285 (QPS) the chain is Lumenal. A helical transmembrane segment spans residues 286-308 (FITLSFILSVGFTGAFTVGRIIV). The Cytoplasmic segment spans residues 309-321 (CHLTKQSFPMFNA). Residues 322–342 (PMLIPLCQIVLYKICLSLWGI) traverse the membrane as a helical segment. The Lumenal segment spans residues 343-346 (ESNK). The helical transmembrane segment at 347 to 367 (IVFALSWLGFGLSLGVHIMFM) threads the bilayer. Over 368–391 (NDIIHEFTEYLDVYALSIKRSKLT) the chain is Cytoplasmic.

It belongs to the CDP-alcohol phosphatidyltransferase class-I family. Mg(2+) serves as cofactor.

It is found in the golgi apparatus membrane. The enzyme catalyses CDP-ethanolamine + a 1,2-diacyl-sn-glycerol = a 1,2-diacyl-sn-glycero-3-phosphoethanolamine + CMP + H(+). The catalysed reaction is CDP-choline + a 1,2-diacyl-sn-glycerol = a 1,2-diacyl-sn-glycero-3-phosphocholine + CMP + H(+). It carries out the reaction CDP-N-methylethanolamine + a 1,2-diacyl-sn-glycerol = a 1,2-diacyl-sn-glycero-3-phospho-N-methylethanolamine + CMP + H(+). It catalyses the reaction CDP-N,N-dimethylethanolamine + a 1,2-diacyl-sn-glycerol = a 1,2-diacyl-sn-glycero-3-phospho-N,N-dimethylethanolamine + CMP + H(+). The enzyme catalyses 1,2-di-(9Z-octadecenoyl)-glycerol + CDP-choline = 1,2-di-(9Z-octadecenoyl)-sn-glycero-3-phosphocholine + CMP + H(+). The catalysed reaction is 1,2-di-(9Z-octadecenoyl)-glycerol + CDP-ethanolamine = 1,2-di-(9Z-octadecenoyl)-sn-glycero-3-phosphoethanolamine + CMP + H(+). The protein operates within phospholipid metabolism; phosphatidylethanolamine biosynthesis; phosphatidylethanolamine from ethanolamine: step 3/3. Its pathway is phospholipid metabolism; phosphatidylcholine biosynthesis; phosphatidylcholine from phosphocholine: step 2/2. Its activity is regulated as follows. Requires a divalent cation activator, and is inhibited by CMP. Activated by phospholipids, especially phosphatidylcholine. Its function is as follows. Catalyzes the final step in the CDP-ethanolamine route leading to phosphatidylethanolamine (PE). Can also catalyze the formation of phosphatidylcholine (PC) from CDP-choline, but does not substantially contribute to PC biosynthesis. Preferentially uses CDP-dimethylethanolamine and CDP-propanolamine as aminoalcohol substrates. Shows highest activity toward di-unsaturated diacylglycerol species as lipid substrates. The CDP-ethanolamine pathway may play a role in maintaining the proper PE species distribution. This is Choline/ethanolaminephosphotransferase 1 (EPT1) from Saccharomyces cerevisiae (strain ATCC 204508 / S288c) (Baker's yeast).